Reading from the N-terminus, the 170-residue chain is MNLKDYIATIENYPKEGITFRDISPLMADGNAYSYAVREIVQYATDKKIDMIVGPEARGFIVGCPVAFELGIGFAPVRKPGKLPREVIFADYEKEYGVDTLTMHADAIKPGQRVLIVDDLLATGGTVKATIEMIEKLGGVVAGCAFLVELDELNGREKIGDYDYKVLMHY.

It belongs to the purine/pyrimidine phosphoribosyltransferase family. Homodimer.

The protein localises to the cytoplasm. The enzyme catalyses AMP + diphosphate = 5-phospho-alpha-D-ribose 1-diphosphate + adenine. The protein operates within purine metabolism; AMP biosynthesis via salvage pathway; AMP from adenine: step 1/1. Functionally, catalyzes a salvage reaction resulting in the formation of AMP, that is energically less costly than de novo synthesis. The protein is Adenine phosphoribosyltransferase of Streptococcus pneumoniae (strain Taiwan19F-14).